Consider the following 347-residue polypeptide: Probable magnetosome protein Mms36 (347 aa).

Residues valine 25–alanine 45 form a helical membrane-spanning segment.

The protein localises to the magnetosome membrane. The 4 genes of this operon collectively influence magnetosome size and number. The protein is Probable magnetosome protein Mms36 of Magnetospirillum gryphiswaldense (strain DSM 6361 / JCM 21280 / NBRC 15271 / MSR-1).